The primary structure comprises 224 residues: Homeobox protein Hox-B6 (224 aa).

The Antp-type hexapeptide signature appears at 127 to 132 (VYPWMQ). The homeobox DNA-binding region spans 146 to 205 (GRRGRQTYTRYQTLELEKEFHYNRYLTRRRRIEIAHALCLTERQIKIWFQNRRMKWKKES). Phosphoserine is present on serine 214.

This sequence belongs to the Antp homeobox family.

It localises to the nucleus. Sequence-specific transcription factor which is part of a developmental regulatory system that provides cells with specific positional identities on the anterior-posterior axis. The protein is Homeobox protein Hox-B6 (Hoxb6) of Mus musculus (Mouse).